The sequence spans 843 residues: Translation initiation factor IF-2 (843 aa).

2 disordered regions span residues 50–72 (LKSS…KTTS) and 94–260 (QRSP…TGPV). Residues 96-135 (SPEEIQAEQKREQDERRAAENAARDKVDADVRQRNEEQAR) show a composition bias toward basic and acidic residues. Positions 139-173 (TATAAAAPAAKAEPAPAAAAPAPAPVVADAPASED) are enriched in low complexity. Composition is skewed to basic and acidic residues over residues 174-203 (AAAR…RGEA) and 227-236 (TTDEESDGAR). The span at 237–250 (RGRGGKGKLKKRNQ) shows a compositional bias: basic residues. Residues 343-516 (SRAPVVTVMG…EVLELTATPT (174 aa)) enclose the tr-type G domain. The segment at 352 to 359 (GHVDHGKT) is G1. 352-359 (GHVDHGKT) contacts GTP. The interval 377 to 381 (GITQH) is G2. Residues 398–401 (DTPG) form a G3 region. GTP is bound by residues 398-402 (DTPGH) and 452-455 (NKID). Residues 452–455 (NKID) form a G4 region. Residues 488-490 (SAK) form a G5 region.

Belongs to the TRAFAC class translation factor GTPase superfamily. Classic translation factor GTPase family. IF-2 subfamily.

Its subcellular location is the cytoplasm. Functionally, one of the essential components for the initiation of protein synthesis. Protects formylmethionyl-tRNA from spontaneous hydrolysis and promotes its binding to the 30S ribosomal subunits. Also involved in the hydrolysis of GTP during the formation of the 70S ribosomal complex. The protein is Translation initiation factor IF-2 of Pseudomonas putida (strain W619).